A 383-amino-acid polypeptide reads, in one-letter code: Paralemmin-1 (383 aa).

N-acetylmethionine is present on methionine 1. The stretch at 7–101 (DTVSQQERLQ…EKEIDVLEFG (95 aa)) forms a coiled coil. Disordered stretches follow at residues 51–164 (RERW…STMM), 242–293 (TLSE…QPGQ), and 333–374 (SVTP…DMKK). Basic and acidic residues predominate over residues 69 to 96 (DMRKQMQEDEQKARSLEESITRLEKEID). Residues serine 116, serine 122, and serine 124 each carry the phosphoserine modification. Residues 133 to 143 (ETMVNAQQTPL) are compositionally biased toward polar residues. A phosphothreonine mark is found at threonine 141, threonine 145, and threonine 153. 2 positions are modified to phosphoserine: serine 157 and serine 161. Threonine 242 is subject to Phosphothreonine. Serine 244 bears the Phosphoserine mark. Positions 257-273 (GLAEDVTRTTPSRREIT) are enriched in basic and acidic residues. Serine 345 bears the Phosphoserine mark. Polar residues predominate over residues 357–367 (QTGPTTTPSDT). Threonine 361, threonine 362, and threonine 363 each carry phosphothreonine. Serine 365 carries the post-translational modification Phosphoserine. Threonine 367 carries the phosphothreonine modification. 2 S-palmitoyl cysteine lipidation sites follow: cysteine 377 and cysteine 379. A Cysteine methyl ester modification is found at cysteine 380. Cysteine 380 carries S-farnesyl cysteine lipidation. A propeptide spans 381-383 (SVM) (removed in mature form).

It belongs to the paralemmin family. In terms of assembly, interacts with dopamine receptor DRD3. As to expression, expressed in neurons cells of neuropil-rich areas of the brain, in the Purkinje cells of the cerebellum, in cells of the cerebral cortex, hippocampus, brainstem nuclei and glial processes and sheaths. Expressed in the medulla of the adrenal chromaffin cells and renal duct cells (at protein level).

Its subcellular location is the cell membrane. The protein resides in the cell projection. It localises to the filopodium membrane. It is found in the axon. The protein localises to the dendrite. Its subcellular location is the dendritic spine. The protein resides in the basolateral cell membrane. It localises to the apicolateral cell membrane. Functionally, involved in plasma membrane dynamics and cell process formation. Necessary for axonal and dendritic filopodia induction, for dendritic spine maturation and synapse formation in a palmitoylation-dependent manner. This chain is Paralemmin-1 (Palm), found in Rattus norvegicus (Rat).